The primary structure comprises 111 residues: Large ribosomal subunit protein eL34B (111 aa).

Residue tyrosine 76 is modified to Phosphotyrosine.

The protein belongs to the eukaryotic ribosomal protein eL34 family. In terms of assembly, component of the large ribosomal subunit (LSU). Mature yeast ribosomes consist of a small (40S) and a large (60S) subunit. The 40S small subunit contains 1 molecule of ribosomal RNA (18S rRNA) and at least 33 different proteins. The large 60S subunit contains 3 rRNA molecules (25S, 5.8S and 5S rRNA) and at least 46 different proteins.

It is found in the cytoplasm. The protein resides in the nucleus. The protein localises to the nucleolus. Its function is as follows. Component of the ribosome, a large ribonucleoprotein complex responsible for the synthesis of proteins in the cell. The small ribosomal subunit (SSU) binds messenger RNAs (mRNAs) and translates the encoded message by selecting cognate aminoacyl-transfer RNA (tRNA) molecules. The large subunit (LSU) contains the ribosomal catalytic site termed the peptidyl transferase center (PTC), which catalyzes the formation of peptide bonds, thereby polymerizing the amino acids delivered by tRNAs into a polypeptide chain. The nascent polypeptides leave the ribosome through a tunnel in the LSU and interact with protein factors that function in enzymatic processing, targeting, and the membrane insertion of nascent chains at the exit of the ribosomal tunnel. This is Large ribosomal subunit protein eL34B (rpl3402) from Schizosaccharomyces pombe (strain 972 / ATCC 24843) (Fission yeast).